Consider the following 207-residue polypeptide: Zinc finger protein JAGGED-like (207 aa).

Positions 1–16 (MRADENNTLDLNNLPD) are enriched in low complexity. The interval 1-20 (MRADENNTLDLNNLPDDPSR) is disordered. The segment at 50–72 (YECRFCSLKFFKSQALGGHMNRH) adopts a C2H2-type zinc-finger fold.

In terms of tissue distribution, expressed in the emerging leaf, stamen and carpel primordia. Not expressed in the apical shoot meristem (SAM).

The protein localises to the nucleus. Functionally, acts with JAG to promote growth and patterning in stamens and carpels. Promotes the growth of the abaxial and adaxial sides of floral organs. Promotes the growth of the pollen-bearing microsporangia in anthers, the carpel walls of the gynoecium and the establishment of the correct number of cell layers in carpel walls. Promotes leaf blade growth and trichome development. This chain is Zinc finger protein JAGGED-like (JGL), found in Arabidopsis thaliana (Mouse-ear cress).